A 552-amino-acid chain; its full sequence is Methyl-coenzyme M reductase II subunit alpha (552 aa).

Residue Gln150 participates in coenzyme F430 binding. Coenzyme B-binding positions include Arg228, 259–260 (KH), and Arg273. Coenzyme M-binding residues include Tyr335 and Tyr446.

This sequence belongs to the methyl-coenzyme M reductase alpha subunit family. MCR is a hexamer of two alpha, two beta, and two gamma chains, forming a dimer of heterotrimers. Requires coenzyme F430 as cofactor.

The catalysed reaction is coenzyme B + methyl-coenzyme M = methane + coenzyme M-coenzyme B heterodisulfide. The protein operates within one-carbon metabolism; methyl-coenzyme M reduction; methane from methyl-coenzyme M: step 1/1. Component of the methyl-coenzyme M reductase (MCR) I that catalyzes the reductive cleavage of methyl-coenzyme M (CoM-S-CH3 or 2-(methylthio)ethanesulfonate) using coenzyme B (CoB or 7-mercaptoheptanoylthreonine phosphate) as reductant which results in the production of methane and the mixed heterodisulfide of CoB and CoM (CoM-S-S-CoB). This is the final step in methanogenesis. In Methanocaldococcus jannaschii (strain ATCC 43067 / DSM 2661 / JAL-1 / JCM 10045 / NBRC 100440) (Methanococcus jannaschii), this protein is Methyl-coenzyme M reductase II subunit alpha (mrtA).